The following is a 326-amino-acid chain: Ras association domain-containing protein 2 (326 aa).

Residues Tyr176–Gln264 form the Ras-associating domain. An SARAH domain is found at Val272–Ile319.

As to quaternary structure, interacts directly with activated KRAS in a GTP-dependent manner. Interacts (via SARAH domain) with STK3/MST2 and STK4/MST1. In terms of processing, phosphorylated by STK3/MST2 and STK4/MST1.

The protein localises to the nucleus. Its subcellular location is the cytoplasm. It is found in the chromosome. It localises to the centromere. The protein resides in the kinetochore. Potential tumor suppressor. Acts as a KRAS-specific effector protein. May promote apoptosis and cell cycle arrest. Stabilizes STK3/MST2 by protecting it from proteasomal degradation. This is Ras association domain-containing protein 2 (Rassf2) from Mus musculus (Mouse).